The following is a 463-amino-acid chain: Elongation factor 1-alpha (463 aa).

In terms of domain architecture, tr-type G spans 5–242; that stretch reads KVHINIVVIG…DSIIPPQRPT (238 aa). Residues 14 to 21 form a G1 region; it reads GHVDSGKS. 14 to 21 lines the GTP pocket; the sequence is GHVDSGKS. The interval 70–74 is G2; that stretch reads GITID. A G3 region spans residues 91–94; the sequence is DAPG. GTP-binding positions include 91 to 95 and 153 to 156; these read DAPGH and NKMD. The tract at residues 153–156 is G4; it reads NKMD. Positions 194 to 196 are G5; the sequence is SGF. 5-glutamyl glycerylphosphorylethanolamine occurs at positions 301 and 374. The tract at residues 443–463 is disordered; sequence KSDGSSGKVTKSAQKAAPKKK. Residues 446–455 are compositionally biased toward polar residues; it reads GSSGKVTKSA.

The protein belongs to the TRAFAC class translation factor GTPase superfamily. Classic translation factor GTPase family. EF-Tu/EF-1A subfamily.

Its subcellular location is the cytoplasm. This protein promotes the GTP-dependent binding of aminoacyl-tRNA to the A-site of ribosomes during protein biosynthesis. In Caenorhabditis elegans, this protein is Elongation factor 1-alpha.